A 500-amino-acid polypeptide reads, in one-letter code: Probable E3 ubiquitin-protein ligase ARI16 (500 aa).

The tract at residues 74-288 is TRIAD supradomain; that stretch reads NSNSSSADRE…QGNWNCSPVA (215 aa). The RING-type 1 zinc finger occupies 78 to 130; it reads SSADRETGDGDYLVSTPFCSHKFSTTCWSEYLSDALKKNKEQRGLISCLSQDC. Zn(2+) is bound by residues Cys-96, His-98, Cys-125, Cys-130, Cys-169, Cys-174, Cys-194, Cys-196, Cys-201, Cys-204, His-209, Cys-214, Cys-241, Cys-244, Cys-261, Cys-263, Cys-268, Cys-271, His-278, and Cys-284. Residues 148–214 form an IBR-type zinc finger; that stretch reads EMYENYILES…GLESHRPVSC (67 aa). The RING-type 2; atypical zinc-finger motif lies at 241–271; it reads CPKCKIPVQQNGDPNYRLINCICSNNFCWIC. Residues 453–483 form a RanBP2-type zinc finger; the sequence is EPGSRWFCDRCTFENSWVDKQCKMCFFPLDY.

This sequence belongs to the RBR family. Ariadne subfamily. Zn(2+) serves as cofactor. Preferentially expressed in green siliques.

The catalysed reaction is [E2 ubiquitin-conjugating enzyme]-S-ubiquitinyl-L-cysteine + [acceptor protein]-L-lysine = [E2 ubiquitin-conjugating enzyme]-L-cysteine + [acceptor protein]-N(6)-ubiquitinyl-L-lysine.. It participates in protein modification; protein ubiquitination. Functionally, might act as an E3 ubiquitin-protein ligase, or as part of E3 complex, which accepts ubiquitin from specific E2 ubiquitin-conjugating enzymes and then transfers it to substrates. The polypeptide is Probable E3 ubiquitin-protein ligase ARI16 (ARI16) (Arabidopsis thaliana (Mouse-ear cress)).